The sequence spans 86 residues: Small nuclear ribonucleoprotein F (86 aa).

The Sm domain occupies 14-86 (NPKPFLKGLV…NVLYIRELPN (73 aa)).

This sequence belongs to the snRNP Sm proteins family. SmF/LSm6 subfamily. Component of the Sm core complex, present in spliceosomal snRNP U1, U2, U4/U6 and U5. The core complex contains SMB1, SMD1, SMD2, SMD3, SME1, SMX3 and SMX2 (Sm proteins B, D1, D2, D3, E, F and G, respectively), and is probably a heptameric ring structure. SMX3 specifically interacts with SME1. Belongs to the CWC complex (or CEF1-associated complex), a spliceosome sub-complex reminiscent of a late-stage spliceosome composed of the U2, U5 and U6 snRNAs and at least BUD13, BUD31, BRR2, CDC40, CEF1, CLF1, CUS1, CWC2, CWC15, CWC21, CWC22, CWC23, CWC24, CWC25, CWC27, ECM2, HSH155, IST3, ISY1, LEA1, MSL1, NTC20, PRP8, PRP9, PRP11, PRP19, PRP21, PRP22, PRP45, PRP46, SLU7, SMB1, SMD1, SMD2, SMD3, SMX2, SMX3, SNT309, SNU114, SPP2, SYF1, SYF2, RSE1 and YJU2. Component of the U4/U6-U5 tri-snRNP complex composed of the U4, U6 and U5 snRNAs and at least PRP3, PRP4, PRP6, PRP8, PRP18, PRP31, PRP38, SNU13, SNU23, SNU66, SNU114, SPP381, SMB1, SMD1, SMD2, SMD3, SMX2, SMX3, LSM2, LSM3, LSM4, LSM5, LSM6, LSM7, LSM8, BRR2 and DIB1.

It is found in the nucleus. The protein localises to the cytoplasm. In terms of biological role, plays a role in pre-mRNA splicing as a core component of the spliceosomal U1, U2, U4 and U5 small nuclear ribonucleoproteins (snRNPs), the building blocks of the spliceosome. This is Small nuclear ribonucleoprotein F (SMX3) from Saccharomyces cerevisiae (strain ATCC 204508 / S288c) (Baker's yeast).